The primary structure comprises 270 residues: F420 non-reducing hydrogenase II cytochrome subunit (270 aa).

5 helical membrane passes run 27–47 (AIAMIVLIITGLKIYAGWEFM), 57–77 (MIAVPFLLAVNWILIPYNIFS), 139–159 (ILIPLEGLALFLITVSGIVLY), 173–193 (WIISISGMIAPTFGMTPVGFL), and 195–215 (VLHLLMTYWFIFELVVHVGIL).

It belongs to the HupC/HyaC/HydC family. In terms of assembly, composed of a large subunit (VhtA), a small subunit (VhtG) and a cytochrome subunit (VhtC). Heme b is required as a cofactor.

The protein localises to the cell membrane. The catalysed reaction is methanophenazine + H2 = dihydromethanophenazine. Its function is as follows. Part of the F420 non-reducing hydrogenase II complex that catalyzes the reduction of methanophenazine to dihydromethanophenazine. The sequence is that of F420 non-reducing hydrogenase II cytochrome subunit from Methanosarcina mazei (strain ATCC BAA-159 / DSM 3647 / Goe1 / Go1 / JCM 11833 / OCM 88) (Methanosarcina frisia).